The chain runs to 207 residues: Claudin-11 (207 aa).

A topological domain (cytoplasmic) is located at residue Met1. Residues 2–22 (VATCLQVVGFVTSFVGWIGII) form a helical membrane-spanning segment. The Extracellular segment spans residues 23 to 82 (VTTSTNDWVVTCSYTIPTCRKMDELGSKGLWADCVMATGLYHCKPLVDILILPGYVQACR). A helical transmembrane segment spans residues 83-103 (ALMIAASVLGLPAILLLLTVL). At 104–122 (PCIRMGHEPGVAKYRRAQL) the chain is on the cytoplasmic side. A helical transmembrane segment spans residues 123 to 143 (AGVLLILLALCAIVATIWFPV). Over 144 to 157 (CAHREITIVSFGYS) the chain is Extracellular. Residues 158–178 (LYAGWIGAVMCLVGGCVIVCC) form a helical membrane-spanning segment. The Cytoplasmic segment spans residues 179–207 (SGDAQSFGENRFYYSSGSSSPTHAKSAHV). Ser193, Ser194, Ser197, and Ser198 each carry phosphoserine.

This sequence belongs to the claudin family. As to quaternary structure, interacts with tetraspanin-3/TSPAN3. Interacts with OCLN.

The protein resides in the cell junction. The protein localises to the tight junction. It is found in the cell membrane. Plays a major role in tight junction-specific obliteration of the intercellular space, through calcium-independent cell-adhesion activity. The polypeptide is Claudin-11 (Cldn11) (Mus musculus (Mouse)).